Consider the following 216-residue polypeptide: Redox-sensing transcriptional repressor Rex (216 aa).

The H-T-H motif DNA-binding region spans 15 to 54; the sequence is KYLRVTQQLIEEGRDAVSSKELGDFTGINPVQVRRDLNAI. 89-94 contacts NAD(+); the sequence is GAGNLG.

The protein belongs to the transcriptional regulatory Rex family. In terms of assembly, homodimer.

It localises to the cytoplasm. In terms of biological role, modulates transcription in response to changes in cellular NADH/NAD(+) redox state. The protein is Redox-sensing transcriptional repressor Rex of Rubrobacter xylanophilus (strain DSM 9941 / JCM 11954 / NBRC 16129 / PRD-1).